Consider the following 384-residue polypeptide: NAD(P) transhydrogenase subunit alpha part 1 (384 aa).

The RQD loop; involved in interaction with PntB stretch occupies residues 126–136 (PRISRAQSMDI). NAD(+) is bound by residues 127–129 (RIS), 132–135 (QSMD), 180–182 (VGV), 202–204 (DVR), Gly234, Gln247, and Leu266.

This sequence belongs to the AlaDH/PNT family. As to quaternary structure, heterotrimer of two alpha chains and a beta (PntB) chain; in Rhodospirillum, the alpha chain is made of two subunits (PntAA and PntAB) and forms a dimer.

It carries out the reaction NAD(+) + NADPH + H(+)(in) = NADH + NADP(+) + H(+)(out). Functionally, the transhydrogenation between NADH and NADP is coupled to respiration and ATP hydrolysis and functions as a proton pump across the membrane. The protein is NAD(P) transhydrogenase subunit alpha part 1 (pntAA) of Rhodospirillum rubrum (strain ATCC 11170 / ATH 1.1.1 / DSM 467 / LMG 4362 / NCIMB 8255 / S1).